Consider the following 604-residue polypeptide: Structure-specific endonuclease subunit MUS81 (604 aa).

3 disordered regions span residues 93–138, 227–248, and 253–272; these read AAVH…REYV, KLDS…GQNV, and LEEE…RPAV. 2 stretches are compositionally biased toward basic and acidic residues: residues 116–128 and 227–240; these read EHTK…VRKE and KLDS…HEDV. The winged helix domain (WHD); critical for endonuclease activity stretch occupies residues 138–254; the sequence is VPQKRSGGYA…GQNVVDLTLE (117 aa). Acidic residues predominate over residues 253–262; sequence LEEEDEDEEK. The 110-residue stretch at 314-423 folds into the ERCC4 domain; it reads VLCVDLCETT…KPIYLVEECG (110 aa). Residues Asp-318, Glu-321, and Asp-353 contribute to the active site. Mg(2+)-binding residues include Asp-318, Glu-321, Asp-353, Glu-384, and Arg-385. The segment at 524–598 is helix-hairpin-helix (2HhH); involved in DNA recognition and bending; the sequence is VREVFARQLM…LSRTIYQLYC (75 aa).

The protein belongs to the XPF family. Part of the heterodimeric DNA structure-specific endonuclease complex MUS81-EME1. Part of the heterodimeric DNA structure-specific endonuclease complex MUS81-EME2. Mg(2+) is required as a cofactor.

It localises to the nucleus. Its subcellular location is the nucleolus. In terms of biological role, catalytic subunit of two functionally distinct, structure-specific, heterodimeric DNA endonucleases MUS81-EME1 and MUS81-EME2 that are involved in the maintenance of genome stability. Both endonucleases have essentially the same substrate specificity though MUS81-EME2 is more active than its MUS81-EME1 counterpart. Both cleave 3'-flaps and nicked Holliday junctions, and exhibit limited endonuclease activity with 5' flaps and nicked double-stranded DNAs. MUS81-EME2 which is active during the replication of DNA is more specifically involved in replication fork processing. Replication forks frequently encounter obstacles to their passage, including DNA base lesions, DNA interstrand cross-links, difficult-to-replicate sequences, transcription bubbles, or tightly bound proteins. One mechanism for the restart of a stalled replication fork involves nucleolytic cleavage mediated by the MUS81-EME2 endonuclease. By acting upon the stalled fork, MUS81-EME2 generates a DNA double-strand break (DSB) that can be repaired by homologous recombination, leading to the restoration of an active fork. MUS81-EME2 could also function in telomere maintenance. MUS81-EME1, on the other hand, is active later in the cell cycle and functions in the resolution of mitotic recombination intermediates including the Holliday junctions, the four-way DNA intermediates that form during homologous recombination. The polypeptide is Structure-specific endonuclease subunit MUS81 (mus81) (Danio rerio (Zebrafish)).